Here is a 305-residue protein sequence, read N- to C-terminus: Transcription factor MYB87 (305 aa).

HTH myb-type domains are found at residues 9-66 (KMAV…RPNL) and 67-117 (KHGG…KKKL). 2 DNA-binding regions (H-T-H motif) span residues 38-62 (WISL…LNYL) and 90-113 (WSII…NTRL).

As to expression, expressed in roots, leaves, internodes, shoot tips and flowers.

The protein localises to the nucleus. Transcription factor that functions as a regulator of genes affecting cell wall organization and remodeling. Activates genes related to the primary cell wall and represses genes related to the secondary cell wall and expansins. Required for the regulation of longitudinal cell growth in stems, leaves, petioles, roots, flowers and siliques. The protein is Transcription factor MYB87 of Arabidopsis thaliana (Mouse-ear cress).